Reading from the N-terminus, the 528-residue chain is 4-nitrophenol 4-monooxygenase/4-nitrocatechol 2-monooxygenase, oxygenase component (528 aa).

100-104 (RPPAG) is a binding site for substrate. FAD contacts are provided by residues 153 to 155 (PMF), 159 to 162 (QFDR), and Thr194. 205-206 (GN) contacts substrate. 461–464 (TMQR) provides a ligand contact to FAD.

The protein belongs to the FADH(2)-utilizing monooxygenase family. The 4-NP/4-NCA monooxygenase is composed of an oxygenase component NpcA and a reductase component NpcB. The cofactor is FAD.

The enzyme catalyses 4-nitrophenol + NADH + O2 + H(+) = 4-nitrocatechol + NAD(+) + H2O. It carries out the reaction 4-nitrocatechol + NADPH + O2 = 2-hydroxy-1,4-benzoquinone + nitrite + NADP(+) + H2O. It catalyses the reaction 4-nitrocatechol + NADH + O2 = 2-hydroxy-1,4-benzoquinone + nitrite + NAD(+) + H2O. It participates in aromatic compound metabolism. The protein operates within xenobiotic degradation. With respect to regulation, inhibited by methimazole. Its function is as follows. Involved in the degradation of para-nitrophenol (4-NP). Catalyzes both the initial hydroxylation of 4-NP to produce 4-nitrocatechol (4-NCA) and the subsequent oxidative release of the nitro group from 4-NCA to produce 2-hydroxy-1,4-benzoquinone. It can also use 4-nitroresorcinol as substrate with a rate of nitrite release similar to that observed with the two physiological substrates, 4-PN and 4-NCA. This chain is 4-nitrophenol 4-monooxygenase/4-nitrocatechol 2-monooxygenase, oxygenase component (npcA), found in Rhodococcus opacus (Nocardia opaca).